A 189-amino-acid polypeptide reads, in one-letter code: Probable nicotinate-nucleotide adenylyltransferase (189 aa).

Belongs to the NadD family.

The catalysed reaction is nicotinate beta-D-ribonucleotide + ATP + H(+) = deamido-NAD(+) + diphosphate. It functions in the pathway cofactor biosynthesis; NAD(+) biosynthesis; deamido-NAD(+) from nicotinate D-ribonucleotide: step 1/1. Catalyzes the reversible adenylation of nicotinate mononucleotide (NaMN) to nicotinic acid adenine dinucleotide (NaAD). The chain is Probable nicotinate-nucleotide adenylyltransferase from Bacillus cereus (strain Q1).